A 291-amino-acid polypeptide reads, in one-letter code: 33 kDa chaperonin (291 aa).

2 disulfide bridges follow: Cys235–Cys237 and Cys268–Cys271.

It belongs to the HSP33 family. In terms of processing, under oxidizing conditions two disulfide bonds are formed involving the reactive cysteines. Under reducing conditions zinc is bound to the reactive cysteines and the protein is inactive.

Its subcellular location is the cytoplasm. In terms of biological role, redox regulated molecular chaperone. Protects both thermally unfolding and oxidatively damaged proteins from irreversible aggregation. Plays an important role in the bacterial defense system toward oxidative stress. This chain is 33 kDa chaperonin, found in Bacillus pumilus (strain SAFR-032).